The primary structure comprises 188 residues: RWD domain-containing protein 4 (188 aa).

Positions 9 to 111 (MELEALRSIY…EYAKDHKEQF (103 aa)) constitute an RWD domain. Residues 132–167 (TPTTAPSSKKKEKKEQLSKAQKRKLADKTDHKGELP) form a disordered region. Basic and acidic residues predominate over residues 155–166 (KLADKTDHKGEL).

The sequence is that of RWD domain-containing protein 4 (Rwdd4) from Mus musculus (Mouse).